Reading from the N-terminus, the 375-residue chain is Chaperone protein DnaJ (375 aa).

The J domain maps to 5 to 69 (DYYEILGIDK…QKRAQYDQFG (65 aa)). A CR-type zinc finger spans residues 131-213 (GKETDIEIPK…CGGSGTVQKN (83 aa)). 8 residues coordinate Zn(2+): Cys144, Cys147, Cys161, Cys164, Cys187, Cys190, Cys201, and Cys204. CXXCXGXG motif repeat units follow at residues 144–151 (CDTCNGSG), 161–168 (CSHCHGSG), 187–194 (CNYCQGTG), and 201–208 (CNTCGGSG).

The protein belongs to the DnaJ family. In terms of assembly, homodimer. Zn(2+) serves as cofactor.

Its subcellular location is the cytoplasm. Functionally, participates actively in the response to hyperosmotic and heat shock by preventing the aggregation of stress-denatured proteins and by disaggregating proteins, also in an autonomous, DnaK-independent fashion. Unfolded proteins bind initially to DnaJ; upon interaction with the DnaJ-bound protein, DnaK hydrolyzes its bound ATP, resulting in the formation of a stable complex. GrpE releases ADP from DnaK; ATP binding to DnaK triggers the release of the substrate protein, thus completing the reaction cycle. Several rounds of ATP-dependent interactions between DnaJ, DnaK and GrpE are required for fully efficient folding. Also involved, together with DnaK and GrpE, in the DNA replication of plasmids through activation of initiation proteins. The protein is Chaperone protein DnaJ of Oceanobacillus iheyensis (strain DSM 14371 / CIP 107618 / JCM 11309 / KCTC 3954 / HTE831).